Consider the following 836-residue polypeptide: Protein O-mannosyl-transferase tmtc2 (836 aa).

A helical membrane pass occupies residues 1–21 (MIAELLSSALGLLLYLNTLGA). The Extracellular segment spans residues 22-77 (DFCYDDSRAIKTNQDLLPETPWNHIFFNDFWGTLLTHSGSHKSYRPLCTLSFRLNY). A helical transmembrane segment spans residues 78-98 (LFGGLDPWNYHLVNVLLHSAV). Residues 99-107 (TGLFTNLCK) lie on the Cytoplasmic side of the membrane. The chain crosses the membrane as a helical span at residues 108–128 (ALFGSGCWTLIAGLLFASHPI). Residues 129-132 (HTEA) are Extracellular-facing. A helical membrane pass occupies residues 133-153 (VSGIVGRADVGSGLFFLLSLL). Over 154-164 (CYMKHCSTRGY) the chain is Cytoplasmic. Residues 165 to 185 (SLSSWCWILCAGFWAACSMLW) traverse the membrane as a helical segment. Residues 186-188 (KEQ) lie on the Extracellular side of the membrane. The helical transmembrane segment at 189 to 209 (GVTVLAVSAVYDVFVFHKLKM) threads the bilayer. Residues 210-220 (NQIISVVFKEK) are Cytoplasmic-facing. The helical transmembrane segment at 221–241 (NVSFFFSVGLLFAWGVILLGA) threads the bilayer. The Extracellular portion of the chain corresponds to 242–312 (RFYWMGNTPP…KTITDWRNIH (71 aa)). The chain crosses the membrane as a helical span at residues 313-333 (TVAFYILLILLAYSSLKGSAI). Over 334-392 (KRDCNGKVFMNGKQNTNGHSCQSDLEHKNAEQNPVIASKLENGVKHHNSHEMQLPSTEN) the chain is Cytoplasmic. Residues 393–413 (IVVLALSLLIVPFVPASNLFF) traverse the membrane as a helical segment. Residue Y414 is a topological domain, extracellular. Residues 415–435 (VGFVIAERVLYIPSMGFCLLV) traverse the membrane as a helical segment. Topologically, residues 436–449 (TVGARALYIKAQKN) are cytoplasmic. A helical membrane pass occupies residues 450 to 470 (ILKNLLFYATAALIVFYGLKT). Residues 471–836 (VVRNGDWKNE…EKQGLKNSKT (366 aa)) are Extracellular-facing. TPR repeat units lie at residues 493-526 (AKAW…RSNM), 527-560 (ADML…RPTL), 561-594 (ASGY…PDEN), 606-639 (TSCL…MPRQ), 643-676 (QSLY…KPDH), 677-710 (IPAH…DPNK), 711-744 (GNCY…DSSE), 745-778 (FDVV…RQNY), and 779-812 (PAAL…KPDD).

The protein belongs to the TMTC family.

The protein resides in the membrane. It localises to the endoplasmic reticulum. The enzyme catalyses a di-trans,poly-cis-dolichyl beta-D-mannosyl phosphate + L-seryl-[protein] = 3-O-(alpha-D-mannosyl)-L-seryl-[protein] + a di-trans,poly-cis-dolichyl phosphate + H(+). The catalysed reaction is a di-trans,poly-cis-dolichyl beta-D-mannosyl phosphate + L-threonyl-[protein] = 3-O-(alpha-D-mannosyl)-L-threonyl-[protein] + a di-trans,poly-cis-dolichyl phosphate + H(+). Its pathway is protein modification; protein glycosylation. Functionally, transfers mannosyl residues to the hydroxyl group of serine or threonine residues. In Xenopus laevis (African clawed frog), this protein is Protein O-mannosyl-transferase tmtc2 (tmtc2).